Here is a 334-residue protein sequence, read N- to C-terminus: B1 bradykinin receptor (334 aa).

Positions 1–21 are disordered; sequence MASQASLKLQPSNQSQQAPPN. The Extracellular segment spans residues 1–41; that stretch reads MASQASLKLQPSNQSQQAPPNITSCEGAPEAWDLLCRVLPG. The segment covering 10 to 21 has biased composition (low complexity); the sequence is QPSNQSQQAPPN. N-linked (GlcNAc...) asparagine glycans are attached at residues Asn13 and Asn21. A helical membrane pass occupies residues 42–62; sequence FVITVCFFGLLGNLLVLSFFL. The Cytoplasmic portion of the chain corresponds to 63–80; the sequence is LPWRRWWQQRRQRLTIAE. The chain crosses the membrane as a helical span at residues 81–101; sequence IYLANLAASDLVFVLGLPFWA. The Extracellular portion of the chain corresponds to 102 to 118; the sequence is ENVGNRFNWPFGSDLCR. A disulfide bridge links Cys117 with Cys196. A helical transmembrane segment spans residues 119–139; it reads VVSGVIKANLFISIFLVVAIS. Residues 140-161 lie on the Cytoplasmic side of the membrane; it reads QDRYRLLVYPMTSWGNRRRRQA. The helical transmembrane segment at 162–182 threads the bilayer; sequence QVTCLLIWVAGGLLSTPTFLL. The Extracellular portion of the chain corresponds to 183–214; it reads RSVKVVPDLNISACILLFPHEAWHFVRMVELN. N-linked (GlcNAc...) asparagine glycosylation occurs at Asn192. The helical transmembrane segment at 215–235 threads the bilayer; it reads VLGFLLPLAAILYFNFHILAS. Residues 236–258 lie on the Cytoplasmic side of the membrane; that stretch reads LRGQKEASRTRCGGPKDSKTMGL. The helical transmembrane segment at 259 to 279 threads the bilayer; sequence ILTLVASFLVCWAPYHFFAFL. Over 280–302 the chain is Extracellular; that stretch reads DFLVQVRVIQDCFWKELTDLGLQ. Residues 303-323 form a helical membrane-spanning segment; that stretch reads LANFFAFVNSCLNPLIYVFAG. Topologically, residues 324-334 are cytoplasmic; it reads RLFKTRVLGTL.

The protein belongs to the G-protein coupled receptor 1 family. Bradykinin receptor subfamily. BDKRB1 sub-subfamily. In terms of tissue distribution, expressed in heart, liver and lung.

The protein localises to the cell membrane. In terms of biological role, this is a receptor for bradykinin. Could be a factor in chronic pain and inflammation. The chain is B1 bradykinin receptor (Bdkrb1) from Mus musculus (Mouse).